Here is a 334-residue protein sequence, read N- to C-terminus: MALDPLGAVVLQSIMALSGRLALAALRLWGPGGGRRPISLCVGASGGFGGGGSSEKKFSLQDVAELLRTRACSRVVVMVGAGISTPSGIPDFRSPGSGLYSNLQQYDIPYPEAIFELGFFFHNPKPFFMLAKELYPGHYRPNVTHYFLRLLHDKELLLRLYTQNIDGLERASGIPASKLVEAHGTFVTATCTVCRRSFPGEDIWADVMADRVPRCPVCTGVVKPDIVFFGEQLPARFLLHMADFALADLLLILGTSLEVEPFASLSEAVQKSVPRLLINRDLVGPFVLSPRRKDVVQLGDVVHGVERLVDLLGWTQELLDLMQRERGKLDGQDR.

Positions 53 to 315 (SSEKKFSLQD…ERLVDLLGWT (263 aa)) constitute a Deacetylase sirtuin-type domain. Position 57 is an N6-succinyllysine (K57). NAD(+) contacts are provided by residues 80 to 100 (GAGISTPSGIPDFRSPGSGLY) and 163 to 166 (QNID). The Proton acceptor role is filled by H183. Residues C191, C194, C215, and C218 each contribute to the Zn(2+) site. NAD(+) is bound by residues 254–256 (GTS) and 279–281 (NRD).

Belongs to the sirtuin family. Class I subfamily. In terms of assembly, upon metabolic stress, forms a complex composed of FOXO3, SIRT3 and mitochondrial RNA polymerase POLRMT; the complex is recruited to mtDNA in a SIRT3-dependent manner. Also forms a complex composed of FOXO3, SIRT3, TFAM and POLRMT. Interacts with NDUFA9, ACSS1, IDH2 and GDH. Interacts with PCCA. Zn(2+) is required as a cofactor. As to expression, expressed in cardiomyocytes (at protein level). Expressed in the brain, liver, kidney and testes. Expressed in skeletal muscles (at protein level).

The protein localises to the mitochondrion matrix. It localises to the cytoplasm. The enzyme catalyses N(6)-acetyl-L-lysyl-[protein] + NAD(+) + H2O = 2''-O-acetyl-ADP-D-ribose + nicotinamide + L-lysyl-[protein]. The catalysed reaction is N(6)-[(S)-lactoyl]-L-lysyl-[protein] + NAD(+) + H2O = 2''-O-(S)-lactoyl-ADP-D-ribose + nicotinamide + L-lysyl-[protein]. NAD-dependent protein deacetylase. Activates or deactivates mitochondrial target proteins by deacetylating key lysine residues. Known targets include ACSS1, IDH, GDH, PDHA1, SOD2, LCAD, SDHA, MRPL12 and the ATP synthase subunit ATP5PO. Contributes to the regulation of the cellular energy metabolism. Important for regulating tissue-specific ATP levels. In response to metabolic stress, deacetylates transcription factor FOXO3 and recruits FOXO3 and mitochondrial RNA polymerase POLRMT to mtDNA to promote mtDNA transcription. Acts as a regulator of ceramide metabolism by mediating deacetylation of ceramide synthases CERS1, CERS2 and CERS6, thereby increasing their activity and promoting mitochondrial ceramide accumulation. Regulates hepatic lipogenesis. Uses NAD(+) substrate imported by SLC25A47, triggering downstream activation of PRKAA1/AMPK-alpha signaling cascade that ultimately downregulates sterol regulatory element-binding protein (SREBP) transcriptional activities and ATP-consuming lipogenesis to restore cellular energy balance. In addition to protein deacetylase activity, also acts as a protein-lysine deacylase by mediating delactylation of proteins, such as CCNE2 and 'Lys-16' of histone H4 (H4K16la). The protein is NAD-dependent protein deacetylase sirtuin-3 of Mus musculus (Mouse).